The following is a 560-amino-acid chain: 2-hydroxyacyl-CoA lyase (560 aa).

E49 is a thiamine diphosphate binding site. Mg(2+)-binding residues include D446 and N473. Residues 558–560 (PRL) carry the Peroxisomal target signal 1 (PTS1) motif.

Belongs to the TPP enzyme family. It depends on Mg(2+) as a cofactor. Thiamine diphosphate is required as a cofactor.

It localises to the cytoplasm. The protein resides in the peroxisome matrix. It carries out the reaction an (R)-2-hydroxy-long-chain-fatty acyl-CoA = a long-chain fatty aldehyde + formyl-CoA. It catalyses the reaction a 2-hydroxy-3-methyl fatty acyl-CoA = a 2-methyl-branched fatty aldehyde + formyl-CoA. Catalyzes a carbon-carbon cleavage reaction; cleaves a 2-hydroxy-3-methylacyl-CoA into formyl-CoA and a 2-methyl-branched fatty aldehyde. The protein is 2-hydroxyacyl-CoA lyase of Saccharomyces cerevisiae (strain ATCC 204508 / S288c) (Baker's yeast).